The primary structure comprises 635 residues: Threonine--tRNA ligase (635 aa).

The region spanning 1 to 61 (MINISFPDGS…DNDCKLRILT (61 aa)) is the TGS domain. The tract at residues 242–533 (DHRKLGRELD…LIEEYAGRFP (292 aa)) is catalytic. Zn(2+) contacts are provided by C333, H384, and H510.

This sequence belongs to the class-II aminoacyl-tRNA synthetase family. Homodimer. Requires Zn(2+) as cofactor.

It is found in the cytoplasm. The catalysed reaction is tRNA(Thr) + L-threonine + ATP = L-threonyl-tRNA(Thr) + AMP + diphosphate + H(+). Functionally, catalyzes the attachment of threonine to tRNA(Thr) in a two-step reaction: L-threonine is first activated by ATP to form Thr-AMP and then transferred to the acceptor end of tRNA(Thr). Also edits incorrectly charged L-seryl-tRNA(Thr). The sequence is that of Threonine--tRNA ligase from Rickettsia conorii (strain ATCC VR-613 / Malish 7).